The primary structure comprises 88 residues: Small ribosomal subunit protein bS20 (88 aa).

Positions 1-27 (MANSKSAKKRALQSEKRRQHNASRRSM) are disordered.

Belongs to the bacterial ribosomal protein bS20 family.

In terms of biological role, binds directly to 16S ribosomal RNA. This chain is Small ribosomal subunit protein bS20, found in Shewanella frigidimarina (strain NCIMB 400).